The primary structure comprises 206 residues: LexA repressor (206 aa).

Residues 28–48 (RAEIATRLGFKSANAAEEHLK) constitute a DNA-binding region (H-T-H motif). Catalysis depends on for autocatalytic cleavage activity residues serine 123 and lysine 160.

The protein belongs to the peptidase S24 family. In terms of assembly, homodimer.

It carries out the reaction Hydrolysis of Ala-|-Gly bond in repressor LexA.. Functionally, represses a number of genes involved in the response to DNA damage (SOS response), including recA and lexA. In the presence of single-stranded DNA, RecA interacts with LexA causing an autocatalytic cleavage which disrupts the DNA-binding part of LexA, leading to derepression of the SOS regulon and eventually DNA repair. This chain is LexA repressor, found in Shewanella sp. (strain MR-7).